The primary structure comprises 155 residues: Pathogenesis-related protein A (155 aa).

Belongs to the BetVI family.

This chain is Pathogenesis-related protein A (PCPR1-1), found in Petroselinum crispum (Parsley).